Reading from the N-terminus, the 448-residue chain is MHDNLPQIWEKAINLIKTELTEVSFNTWVKPIQAISLDNETLVLGVPNDFTQGILNARYNTLISNAVKQVTSKNYEVHIVVPSEERVGDTQNINARRSNAQSPIMGNSPLILNPKYTFDTFVIGNSNRFAHAASVAVAESPAKAYNPLFIYGGVGLGKTHLMNAIGHYILANNPKAKVVYVSSETFTNELINSIRDDRNVEFRNRYRNVDVLLVDDIQFIAGKERTQEEFFHTFNALHESNKQIIISSDRPPKEIPTLEERLRSRFEWGLITDIQPPDLETRIAILRKKAQMENIYVPDEVTAHIAKKIQSNIRELEGALIRIVAYSSLTNSEVTVELASEALKEIFTSKPRLLNVPLIKEVVSNHFSIKLEDFDSKKRTRSISYPRQVAMYLTRELTDLSLPKIGDEFGGRDHTTVMHAHSKIVNEINSDSDLKNKLDAIIKELKSD.

A domain I, interacts with DnaA modulators region spans residues 1 to 85 (MHDNLPQIWE…EVHIVVPSEE (85 aa)). Residues 85–110 (ERVGDTQNINARRSNAQSPIMGNSPL) form a domain II region. A domain III, AAA+ region region spans residues 111–327 (ILNPKYTFDT…GALIRIVAYS (217 aa)). 4 residues coordinate ATP: glycine 155, glycine 157, lysine 158, and threonine 159. The domain IV, binds dsDNA stretch occupies residues 328 to 448 (SLTNSEVTVE…DAIIKELKSD (121 aa)).

This sequence belongs to the DnaA family. In terms of assembly, oligomerizes as a right-handed, spiral filament on DNA at oriC.

The protein resides in the cytoplasm. Functionally, plays an essential role in the initiation and regulation of chromosomal replication. ATP-DnaA binds to the origin of replication (oriC) to initiate formation of the DNA replication initiation complex once per cell cycle. Binds the DnaA box (a 9 base pair repeat at the origin) and separates the double-stranded (ds)DNA. Forms a right-handed helical filament on oriC DNA; dsDNA binds to the exterior of the filament while single-stranded (ss)DNA is stabiized in the filament's interior. The ATP-DnaA-oriC complex binds and stabilizes one strand of the AT-rich DNA unwinding element (DUE), permitting loading of DNA polymerase. After initiation quickly degrades to an ADP-DnaA complex that is not apt for DNA replication. Binds acidic phospholipids. In Alkaliphilus metalliredigens (strain QYMF), this protein is Chromosomal replication initiator protein DnaA.